Here is a 549-residue protein sequence, read N- to C-terminus: Glucose-6-phosphate isomerase (549 aa).

Glu355 functions as the Proton donor in the catalytic mechanism. Residues His386 and Lys514 contribute to the active site.

The protein belongs to the GPI family.

It localises to the cytoplasm. The enzyme catalyses alpha-D-glucose 6-phosphate = beta-D-fructose 6-phosphate. Its pathway is carbohydrate biosynthesis; gluconeogenesis. The protein operates within carbohydrate degradation; glycolysis; D-glyceraldehyde 3-phosphate and glycerone phosphate from D-glucose: step 2/4. In terms of biological role, catalyzes the reversible isomerization of glucose-6-phosphate to fructose-6-phosphate. The protein is Glucose-6-phosphate isomerase of Salmonella enteritidis PT4 (strain P125109).